Reading from the N-terminus, the 709-residue chain is Rho guanine nucleotide exchange factor 16 (709 aa).

Residue alanine 2 is modified to N-acetylalanine. Phosphoserine occurs at positions 6, 41, and 107. Residues glutamate 22–proline 70 form a disordered region. Positions serine 114–arginine 146 are disordered. 3 positions are modified to phosphoserine: serine 174, serine 191, and serine 208. Positions leucine 180–lysine 246 are disordered. Residues serine 191–glycine 207 show a composition bias toward basic residues. Phosphothreonine is present on threonine 226. Phosphoserine is present on residues serine 227, serine 230, and serine 240. Residues leucine 275 to leucine 481 are required for RHOG activation and mediates interaction with EPHA2. The DH domain maps to lysine 284–glycine 468. Residues tryptophan 501 to arginine 620 form the PH domain. The SH3 domain occupies glycine 629–serine 689. Positions threonine 707–valine 709 match the PDZ-binding motif motif.

As to quaternary structure, interacts with ELMO2, EPHA2, RAC1 and RHOG; mediates activation of RAC1 by EPHA2. Interacts with TAX1BP3 (via PDZ domain). May interact with CDC42; stimulated by HPV16 E6.

The protein resides in the cytoplasm. In terms of biological role, guanyl-nucleotide exchange factor of the RHOG GTPase stimulating the exchange of RHOG-associated GDP for GTP. May play a role in chemotactic cell migration by mediating the activation of RAC1 by EPHA2. May also activate CDC42 and mediate activation of CDC42 by the viral protein HPV16 E6. This Homo sapiens (Human) protein is Rho guanine nucleotide exchange factor 16 (ARHGEF16).